Reading from the N-terminus, the 636-residue chain is Probable potassium transport system protein Kup (636 aa).

The next 12 helical transmembrane spans lie at 23–43, 63–83, 114–134, 150–170, 182–202, 217–237, 260–280, 298–318, 350–370, 379–399, 407–427, and 432–452; these read LVIGAIGVVFGDIGTSPLYSL, IISLLFWAMTIVVSIKYVVFV, VLMMLGIFGACMFYGDAVITP, PQLSRFVIPITLVILVALFLI, FGPVMVVWFVTLGLLGLYNLV, ISFLIAHSLQAFIVLGSVFLV, WFVLVMPCLILNYFGQGAMLL, LLIPMVVLATCATVIASQAVI, IYLPVINWILLVLVVAVVISF, AYGIAVTTTMVITTFLAAVVM, PALVTLLGLSFLLVDLAFFAA, and VAEGGWFPLLLGSTAFFLLMT.

The protein belongs to the HAK/KUP transporter (TC 2.A.72) family.

It localises to the cell inner membrane. It carries out the reaction K(+)(in) + H(+)(in) = K(+)(out) + H(+)(out). In terms of biological role, transport of potassium into the cell. Likely operates as a K(+):H(+) symporter. The polypeptide is Probable potassium transport system protein Kup (Cupriavidus pinatubonensis (strain JMP 134 / LMG 1197) (Cupriavidus necator (strain JMP 134))).